The primary structure comprises 256 residues: uncharacterized protein (256 aa).

The signal sequence occupies residues 1–22 (MGYLKRFALYISVMILIFAIAG). A lipid anchor (N-palmitoyl cysteine) is attached at Cys23. Cys23 carries S-diacylglycerol cysteine lipidation.

It belongs to the staphylococcal tandem lipoprotein family.

Its subcellular location is the cell membrane. This is an uncharacterized protein from Staphylococcus aureus (strain COL).